A 1585-amino-acid polypeptide reads, in one-letter code: Maestro heat-like repeat-containing protein family member 2B (1585 aa).

HEAT repeat units follow at residues 28–65, 228–263, 272–309, 310–346, 405–445, 531–569, 572–611, 662–699, 777–819, 964–1001, 1021–1059, 1112–1151, 1157–1195, 1258–1295, and 1363–1402; these read VNKE…DMRD, GYAL…AAVL, LRRS…LAHS, NPGE…ADEP, TLNR…LVIG, IGLL…STVL, TMLL…NSTE, ENHL…LTKT, SYKE…LKPQ, HLEV…KFIP, PTCT…HMPV, ASSG…VISM, GLYP…QGEQ, GVIL…EPIL, and CESL…EQDD.

As to quaternary structure, found in a complex at least composed of MROH2B, PRKACA isoform 2 and TCP11. Interacts with PRKACA. Interacts with TCP11. In terms of processing, constitutively phosphorylated on serine and threonine residues in acrosomal region of the sperm head, midpiece and flagellar regions of noncapacitated spermatozoa. Phosphorylation on tyrosine residues increases upon sperm capacitation within the acrosomal and tail regions in a protein kinase A (PKA)-dependent signaling pathway.

It localises to the cytoplasm. Its subcellular location is the cytoplasmic vesicle. The protein resides in the secretory vesicle. It is found in the acrosome. The protein localises to the cell projection. It localises to the cilium. Its subcellular location is the flagellum. Its function is as follows. May play a role in the process of sperm capacitation. The polypeptide is Maestro heat-like repeat-containing protein family member 2B (Homo sapiens (Human)).